The primary structure comprises 113 residues: Nitrogenase-stabilizing/protective protein NifW (113 aa).

Belongs to the NifW family. In terms of assembly, homotrimer; associates with NifD.

Functionally, may protect the nitrogenase Fe-Mo protein from oxidative damage. This is Nitrogenase-stabilizing/protective protein NifW from Dechloromonas aromatica (strain RCB).